The primary structure comprises 372 residues: DNA replication and repair protein RecF (372 aa).

An ATP-binding site is contributed by 30-37; it reads GANGQGKT.

This sequence belongs to the RecF family.

It localises to the cytoplasm. Its function is as follows. The RecF protein is involved in DNA metabolism; it is required for DNA replication and normal SOS inducibility. RecF binds preferentially to single-stranded, linear DNA. It also seems to bind ATP. The polypeptide is DNA replication and repair protein RecF (Heliobacterium modesticaldum (strain ATCC 51547 / Ice1)).